We begin with the raw amino-acid sequence, 495 residues long: UDP-glycosyltransferase 73C12 (495 aa).

His-24 serves as the catalytic Proton acceptor. His-24 is a binding site for an anthocyanidin. Residue Asp-129 is the Charge relay of the active site. Positions 356, 358, 373, 376, 377, 378, and 381 each coordinate UDP-alpha-D-glucose. Ala-396 lines the an anthocyanidin pocket. The UDP-alpha-D-glucose site is built by Asp-397 and Gln-398.

The protein belongs to the UDP-glycosyltransferase family.

The enzyme catalyses oleanolate + UDP-alpha-D-glucose = oleanolate 3-O-beta-D-glucoside + UDP + H(+). Functionally, catalyzes the transfer of a glucose (Glc) moiety from UDP-Glc to the C-3 position of the oleanane sapogenins oleanolate and hederagenin, and to the C-28 carboxylic group of the lupane sapogenin betulinate. The monoglucosylated hederagenin 3-O-beta-D-glucoside is a feeding deterrent of the yellow-striped flea beetle (Phyllotreta nemorum). The chain is UDP-glycosyltransferase 73C12 from Barbarea vulgaris (Yellow rocket).